The sequence spans 49 residues: uncharacterized protein (49 aa).

A helical membrane pass occupies residues W16–F36.

It localises to the cell membrane. This is an uncharacterized protein from Bacillus subtilis (strain 168).